A 444-amino-acid chain; its full sequence is Argininosuccinate synthase (444 aa).

ATP contacts are provided by residues 17–25 (AFSGGLDTS) and alanine 43. Residue tyrosine 99 participates in L-citrulline binding. ATP contacts are provided by glycine 129 and threonine 131. The L-aspartate site is built by threonine 131, asparagine 135, and aspartate 136. Residue asparagine 135 coordinates L-citrulline. Aspartate 136 contacts ATP. L-citrulline contacts are provided by arginine 139 and serine 192. Aspartate 194 is a binding site for ATP. Residues threonine 201, glutamate 203, and glutamate 280 each coordinate L-citrulline.

It belongs to the argininosuccinate synthase family. Type 2 subfamily. As to quaternary structure, homotetramer.

It is found in the cytoplasm. It catalyses the reaction L-citrulline + L-aspartate + ATP = 2-(N(omega)-L-arginino)succinate + AMP + diphosphate + H(+). Its pathway is amino-acid biosynthesis; L-arginine biosynthesis; L-arginine from L-ornithine and carbamoyl phosphate: step 2/3. The protein is Argininosuccinate synthase of Delftia acidovorans (strain DSM 14801 / SPH-1).